The primary structure comprises 290 residues: Ig delta chain C region membrane-bound form (290 aa).

An Ig-like 1 domain is found at P5–T105. A disulfide bridge connects residues C26 and C78. 2 N-linked (GlcNAc...) asparagine glycosylation sites follow: N58 and N75. The segment at P89–K111 is disordered. Residues W96–K111 are compositionally biased toward polar residues. 3 N-linked (GlcNAc...) asparagine glycosylation sites follow: N112, N135, and N227. An Ig-like 2 domain is found at P133–A233. Residues G262–L279 form a helical membrane-spanning segment. The Cytoplasmic portion of the chain corresponds to Y280–K290.

In terms of tissue distribution, cell lines producing IgD contain several mRNA species for Ig delta chains. In plasmacytomas, the secreted form is the major component, and the membrane-bound form is a minor component. In spleen, however, the membrane-bound form is the major component. These two forms differ in their C-terminal segments.

It is found in the cell membrane. The polypeptide is Ig delta chain C region membrane-bound form (Mus musculus (Mouse)).